The following is a 228-amino-acid chain: DNA repair protein RecO (228 aa).

It belongs to the RecO family.

Its function is as follows. Involved in DNA repair and RecF pathway recombination. In Mannheimia succiniciproducens (strain KCTC 0769BP / MBEL55E), this protein is DNA repair protein RecO.